A 601-amino-acid polypeptide reads, in one-letter code: Aspartate--tRNA(Asp/Asn) ligase (601 aa).

Residue Glu177 participates in L-aspartate binding. Residues 201 to 204 are aspartate; sequence QLFK. Arg223 provides a ligand contact to L-aspartate. ATP-binding positions include 223 to 225 and Gln232; that span reads RDE. His455 provides a ligand contact to L-aspartate. Glu489 is an ATP binding site. Arg496 contributes to the L-aspartate binding site. An ATP-binding site is contributed by 541 to 544; sequence GWDR. Residues 568 to 601 are disordered; that stretch reads VDPLTDAPAPIPLEQRRETGVDFKPKKKTDESAV. Residues 581 to 601 are compositionally biased toward basic and acidic residues; sequence EQRRETGVDFKPKKKTDESAV.

Belongs to the class-II aminoacyl-tRNA synthetase family. Type 1 subfamily. In terms of assembly, homodimer.

The protein localises to the cytoplasm. It carries out the reaction tRNA(Asx) + L-aspartate + ATP = L-aspartyl-tRNA(Asx) + AMP + diphosphate. Its function is as follows. Aspartyl-tRNA synthetase with relaxed tRNA specificity since it is able to aspartylate not only its cognate tRNA(Asp) but also tRNA(Asn). Reaction proceeds in two steps: L-aspartate is first activated by ATP to form Asp-AMP and then transferred to the acceptor end of tRNA(Asp/Asn). The chain is Aspartate--tRNA(Asp/Asn) ligase from Corynebacterium diphtheriae (strain ATCC 700971 / NCTC 13129 / Biotype gravis).